Here is a 121-residue protein sequence, read N- to C-terminus: UPF0295 protein OB0906 (121 aa).

2 helical membrane-spanning segments follow: residues 14 to 34 and 43 to 63; these read IRTF…GGIL and VIFF…YVWI.

The protein belongs to the UPF0295 family.

It is found in the cell membrane. The sequence is that of UPF0295 protein OB0906 from Oceanobacillus iheyensis (strain DSM 14371 / CIP 107618 / JCM 11309 / KCTC 3954 / HTE831).